We begin with the raw amino-acid sequence, 787 residues long: LPS-assembly protein LptD (787 aa).

An N-terminal signal peptide occupies residues 1 to 39 (MPRKTLLPLVPACDAAPRRKRLAAALLAVPGLVPAVSQA).

Belongs to the LptD family. Component of the lipopolysaccharide transport and assembly complex. Interacts with LptE and LptA.

The protein localises to the cell outer membrane. Its function is as follows. Together with LptE, is involved in the assembly of lipopolysaccharide (LPS) at the surface of the outer membrane. The sequence is that of LPS-assembly protein LptD from Burkholderia thailandensis (strain ATCC 700388 / DSM 13276 / CCUG 48851 / CIP 106301 / E264).